The sequence spans 274 residues: MSSLIKEIEEAWQIKGQLLQDSSKLIMLKKTLNDVIASLNQGAIRVCEKKENSWEVNEWVKKAILLYFITTESQLYNNNYNSWYDKVAPKFSVDTDENIFKEAAIRKVPGAVVRTGTYIAKNVVIMPSFINIGAYIDEGTMIDTWATIGSCAQIGKHCHISGGTGIGGVLEPLQAKPVIIEDNCFIGARSEIAEGVIVEEGAVISMGVFIGSSTKIIYRDTGEIIYGRIPAYSVVVPGVLPAKEAGKPGLYCAVIIKQVDKTTRSKVSINDLLR.

Positions 106 and 143 each coordinate substrate.

The protein belongs to the transferase hexapeptide repeat family. As to quaternary structure, homotrimer.

It localises to the cytoplasm. It carries out the reaction (S)-2,3,4,5-tetrahydrodipicolinate + succinyl-CoA + H2O = (S)-2-succinylamino-6-oxoheptanedioate + CoA. The protein operates within amino-acid biosynthesis; L-lysine biosynthesis via DAP pathway; LL-2,6-diaminopimelate from (S)-tetrahydrodipicolinate (succinylase route): step 1/3. This is 2,3,4,5-tetrahydropyridine-2,6-dicarboxylate N-succinyltransferase from Rickettsia akari (strain Hartford).